A 464-amino-acid polypeptide reads, in one-letter code: Glycine receptor subunit alpha-3 (464 aa).

The signal sequence occupies residues 1–33 (MAHVRHFRTLLSGFYFWEAALLLSLVATKETNS). Over 34 to 255 (ARSRSAPMSP…RFHLERQMGY (222 aa)) the chain is Extracellular. A glycan (N-linked (GlcNAc...) asparagine) is linked at N71. An intrachain disulfide couples C171 to C185. Residues E225 and D227 each contribute to the Zn(2+) site. Residues C231 and C242 are joined by a disulfide bond. 235–240 (YNTGKF) contributes to the strychnine binding site. H248 contacts Zn(2+). The helical transmembrane segment at 256–277 (YLIQMYIPSLLIVILSWVSFWI) threads the bilayer. Residues 278 to 282 (NMDAA) are Cytoplasmic-facing. Residues 283–303 (PARVALGITTVLTMTTQSSGS) form a helical membrane-spanning segment. Residues 304–314 (RASLPKVSYVK) lie on the Extracellular side of the membrane. A helical transmembrane segment spans residues 315 to 335 (AIDIWMAVCLLFVFSALLEYA). The Cytoplasmic segment spans residues 336–430 (AVNFVSRQHK…FIDRAKKIDT (95 aa)). S370 carries the post-translational modification Phosphoserine. A Phosphoserine; by PKA modification is found at S379. Residues 431–451 (ISRACFPLAFLIFNIFYWVIY) traverse the membrane as a helical segment. At 452-464 (KILRHEDIHHQQD) the chain is on the extracellular side.

The protein belongs to the ligand-gated ion channel (TC 1.A.9) family. Glycine receptor (TC 1.A.9.3) subfamily. GLRA3 sub-subfamily. In terms of assembly, homopentamer (in vitro). Heteropentamer composed of GLRA3 and GLRB. Both homopentamers and heteropentamers form functional ion channels, but their characteristics are subtly different. Post-translationally, phosphorylated by PKA; this causes down-regulation of channel activity.

The protein localises to the postsynaptic cell membrane. It localises to the perikaryon. Its subcellular location is the cell projection. The protein resides in the dendrite. It is found in the synapse. The protein localises to the cell membrane. The catalysed reaction is chloride(in) = chloride(out). Its activity is regulated as follows. Low levels of Zn(2+) ions (1 uM) increase glycine sensitivity and decrease the glycine concentration required for half-maximal channel activity. Channel activity is strongly enhanced by ethanol. Inhibited by picrotoxin. Inhibited by prostaglandin E2, probably via PKA-mediated phosphorylation at Ser-379. Its function is as follows. Glycine receptors are ligand-gated chloride channels. Channel opening is triggered by extracellular glycine. Channel characteristics depend on the subunit composition; heteropentameric channels display faster channel closure. Plays an important role in the down-regulation of neuronal excitability. Contributes to the generation of inhibitory postsynaptic currents. Contributes to increased pain perception in response to increased prostaglandin E2 levels. Plays a role in cellular responses to ethanol. This chain is Glycine receptor subunit alpha-3 (Glra3), found in Rattus norvegicus (Rat).